The primary structure comprises 236 residues: uncharacterized protein (236 aa).

An HTH gntR-type domain is found at 5–73; it reads QSTVENAKEK…DRKGWFVTQP (69 aa). The segment at residues 33 to 52 is a DNA-binding region (H-T-H motif); it reads ERELGELLGIKRMTLRQALL.

This is an uncharacterized protein from Escherichia coli O157:H7.